The sequence spans 119 residues: DNA-binding protein inhibitor ID-3 (119 aa).

The 53-residue stretch at 28–80 (RGKSPSAEEPLSLLDDMNHCYSRLRELVPGVPRGTQLSQVEILQRVIDYILDL) folds into the bHLH domain.

As to quaternary structure, homodimer, and heterodimer with other HLH proteins. Interacts with COPS5 and COPS7A. Interacts with IFI204. Interacts with GATA4 and NKX2-5. Interacts with ANKRD2; both proteins cooperate in myoblast differentiation. Interacts with CLOCK and BMAL1. Post-translationally, phosphorylated in vitro by CDC2 and PKC.

It localises to the nucleus. Transcriptional regulator (lacking a basic DNA binding domain) which negatively regulates the basic helix-loop-helix (bHLH) transcription factors by forming heterodimers and inhibiting their DNA binding and transcriptional activity. Implicated in regulating a variety of cellular processes, including cellular growth, senescence, differentiation, apoptosis, angiogenesis, and neoplastic transformation. Involved in myogenesis by inhibiting skeletal muscle and cardiac myocyte differentiation and promoting muscle precursor cells proliferation. Inhibits the binding of E2A-containing protein complexes to muscle creatine kinase E-box enhancer. Regulates the circadian clock by repressing the transcriptional activator activity of the CLOCK-BMAL1 heterodimer. The sequence is that of DNA-binding protein inhibitor ID-3 (Id3) from Rattus norvegicus (Rat).